A 429-amino-acid polypeptide reads, in one-letter code: MAAIVIVGAQWGDEGKGKATDILGGLVDYVVKPNGGNNAGHTVVVGGEKYELKLLPAGVLSETATPILGNGVVINLEALFEEIDGLEARGADASRLRISANAHLVAPYHQVMDRVQERFLGKRAIGTTGRGIGPTYADKVSRVGIRVQDIFDESILRQKVESALDYKNQVLVKMYNRKAIVAEEIVQYFLSYADRLRPMVIDATLVLNEALDQGKHVLMEGGQATMLDVDHGTYPFVTSSNPTAGGASVGSGIGPTKITSSLGIIKAYTTRVGAGPFPTELFDKWGEYLQTVGGEVGVNTGRKRRCGWYDSVIARYASRVNGFTDYFLTKLDVLTGIGEIPICVAYDVDGVRHDEMPLTQSEFHHATPIFETMPAWDEDITDCKTFEDLPQKAQDYVRRLEELSGARFSYIGVGPGRDQTIVLHDVLEG.

GTP is bound by residues 12–18 and 40–42; these read GDEGKGK and GHT. Aspartate 13 acts as the Proton acceptor in catalysis. 2 residues coordinate Mg(2+): aspartate 13 and glycine 40. Residues 13 to 16, 38 to 41, threonine 128, arginine 142, glutamine 223, threonine 238, and arginine 302 each bind IMP; these read DEGK and NAGH. The Proton donor role is filled by histidine 41. Substrate is bound at residue 298-304; it reads VNTGRKR. GTP contacts are provided by residues arginine 304, 330–332, and 412–414; these read KLD and GVG.

Belongs to the adenylosuccinate synthetase family. Homodimer. It depends on Mg(2+) as a cofactor.

The protein localises to the cytoplasm. The catalysed reaction is IMP + L-aspartate + GTP = N(6)-(1,2-dicarboxyethyl)-AMP + GDP + phosphate + 2 H(+). Its pathway is purine metabolism; AMP biosynthesis via de novo pathway; AMP from IMP: step 1/2. Functionally, plays an important role in the de novo pathway of purine nucleotide biosynthesis. Catalyzes the first committed step in the biosynthesis of AMP from IMP. The chain is Adenylosuccinate synthetase from Corynebacterium glutamicum (strain R).